We begin with the raw amino-acid sequence, 48 residues long: uncharacterized protein (48 aa).

The chain crosses the membrane as a helical span at residues 21–43; the sequence is SIFVSLGVFAVSVAILKSRLGNF.

Its subcellular location is the membrane. This is an uncharacterized protein from Schizosaccharomyces pombe (strain 972 / ATCC 24843) (Fission yeast).